We begin with the raw amino-acid sequence, 268 residues long: Zinc import ATP-binding protein ZnuC (268 aa).

Positions 16-231 (IQLKNINVVF…PTFMRLWGNQ (216 aa)) constitute an ABC transporter domain. 48–55 (GPNGGGKS) is a binding site for ATP.

The protein belongs to the ABC transporter superfamily. Zinc importer (TC 3.A.1.15.5) family. In terms of assembly, the complex is composed of two ATP-binding proteins (ZnuC), two transmembrane proteins (ZnuB) and a solute-binding protein (ZnuA).

It localises to the cell inner membrane. The enzyme catalyses Zn(2+)(out) + ATP(in) + H2O(in) = Zn(2+)(in) + ADP(in) + phosphate(in) + H(+)(in). Functionally, part of the ABC transporter complex ZnuABC involved in zinc import. Responsible for energy coupling to the transport system. The sequence is that of Zinc import ATP-binding protein ZnuC from Haemophilus influenzae (strain ATCC 51907 / DSM 11121 / KW20 / Rd).